Here is a 362-residue protein sequence, read N- to C-terminus: Putative F-box/kelch-repeat protein At3g20710 (362 aa).

The F-box domain maps to 1–50; sequence MMMSNLPKDLVEEILSRVPFKYLRAIRSTCKNWYDLSKNRSFANKNIDKA. Kelch repeat units follow at residues 150–201 and 293–341; these read YDKS…VSLN and IYCR…YFKS.

This is Putative F-box/kelch-repeat protein At3g20710 from Arabidopsis thaliana (Mouse-ear cress).